A 237-amino-acid polypeptide reads, in one-letter code: Ribosomal RNA small subunit methyltransferase G (237 aa).

Residues Gly78, Phe83, 129 to 130 (AE), and Arg148 contribute to the S-adenosyl-L-methionine site.

This sequence belongs to the methyltransferase superfamily. RNA methyltransferase RsmG family.

It localises to the cytoplasm. Functionally, specifically methylates the N7 position of a guanine in 16S rRNA. The chain is Ribosomal RNA small subunit methyltransferase G from Streptococcus pyogenes serotype M1.